We begin with the raw amino-acid sequence, 265 residues long: WUSCHEL-related homeobox 3B (265 aa).

The homeobox; WUS-type DNA-binding region spans 4-68 (TPSTRWCPTP…NHKARERQRL (65 aa)). Disordered regions lie at residues 77–107 (QQQY…APPA) and 242–265 (PTKS…TSTN). Over residues 254 to 265 (SSKSSSCSTSTN) the composition is skewed to low complexity.

The protein belongs to the WUS homeobox family. In terms of tissue distribution, predominantly expressed in tissues enriched for shoot meristems and young lateral organ primordia. First expressed in lateral domains of shoot meristems. It is then expressed in the margins of young lateral organ primordia. Not expressed in roots, seedling leaves or fully expanded coleoptiles. Also expressed in vegetative shoot apices (five leaf primordia and the SAM) and in the male inflorescence. Expressed at high level in the female inflorescence.

The protein resides in the nucleus. Functionally, probable transcription factor required to initiate organ founder cells in a lateral domain of shoot meristems. Involved in leaf formation. The chain is WUSCHEL-related homeobox 3B (WOX3B) from Zea mays (Maize).